Reading from the N-terminus, the 203-residue chain is UDP-N-acetylglucosamine transferase subunit ALG13 (203 aa).

It belongs to the glycosyltransferase 28 family. As to quaternary structure, heterodimer with ALG14 to form a functional enzyme.

The protein localises to the endoplasmic reticulum. It carries out the reaction an N-acetyl-alpha-D-glucosaminyl-diphospho-di-trans,poly-cis-dolichol + UDP-N-acetyl-alpha-D-glucosamine = an N,N'-diacetylchitobiosyl-diphospho-di-trans,poly-cis-dolichol + UDP + H(+). Functionally, involved in protein N-glycosylation. Essential for the second step of the dolichol-linked oligosaccharide pathway. The polypeptide is UDP-N-acetylglucosamine transferase subunit ALG13 (ALG13) (Eremothecium gossypii (strain ATCC 10895 / CBS 109.51 / FGSC 9923 / NRRL Y-1056) (Yeast)).